The sequence spans 576 residues: Mycobactin import ATP-binding/permease protein IrtB (576 aa).

Over 1 to 25 the chain is Cytoplasmic; sequence MIRTLIALVPADKRGTLGLYTVLTV. Residues 19-299 enclose the ABC transmembrane type-1 domain; the sequence is LYTVLTVLSV…LSELTPAIES (281 aa). The chain crosses the membrane as a helical span at residues 26–46; that stretch reads LSVVIRAAGTVLLVPLVAALF. At 47–52 the chain is on the periplasmic side; that stretch reads GDTPQD. The helical transmembrane segment at 53-73 threads the bilayer; the sequence is AWPWLGWLTAATAAGWIVDTT. The Cytoplasmic segment spans residues 74–131; that stretch reads TSRLGFDLGFAVLDHTQHDVADRMPNIRLDWLTAENTATARAAIASTGPELVGLVVNL. The next 2 membrane-spanning stretches (helical) occupy residues 132-152 and 153-173; these read LTPL…LVAV and SPPL…AMWA. At 174-241 the chain is on the cytoplasmic side; the sequence is SNRLSRKADT…RLLAMQIPGQ (68 aa). The chain crosses the membrane as a helical span at residues 242–262; it reads LLFSLASQLALILLAGMATWL. Residues 263–267 are Periplasmic-facing; it reads TVRGE. A helical transmembrane segment spans residues 268-288; sequence LSVPEAVAMIVVVARYLEPFT. Over 289 to 576 the chain is Cytoplasmic; it reads SLSELTPAIE…HEAADWQITH (288 aa). In terms of domain architecture, ABC transporter spans 332–565; sequence IEFDCVTFGY…GGRFDEFWRR (234 aa). 364-371 serves as a coordination point for ATP; that stretch reads GPSGSGKS.

It belongs to the ABC transporter superfamily. Siderophore-Fe(3+) uptake transporter (SIUT) (TC 3.A.1.21) family. As to quaternary structure, forms a heterodimer with IrtA.

The protein resides in the cell inner membrane. Part of the ABC transporter complex IrtAB involved in the import of iron-bound mycobactin (Fe-MBT) and carboxymycobactin (Fe-cMBT). Has a preference for Fe-MBT over Fe-cMBT. Transmembrane domains (TMD) form a pore in the membrane and the ATP-binding domain (NBD) is responsible for energy generation. The sequence is that of Mycobactin import ATP-binding/permease protein IrtB from Mycolicibacterium smegmatis (strain ATCC 700084 / mc(2)155) (Mycobacterium smegmatis).